The sequence spans 312 residues: Undecaprenyl-diphosphatase (312 aa).

7 helical membrane passes run Gly74 to Trp94, Val122 to Ile142, Val154 to Gly174, Leu183 to Val203, Phe226 to Leu246, Val254 to Ile274, and Ile288 to Val308.

The protein belongs to the UppP family.

It is found in the cell inner membrane. It catalyses the reaction di-trans,octa-cis-undecaprenyl diphosphate + H2O = di-trans,octa-cis-undecaprenyl phosphate + phosphate + H(+). Catalyzes the dephosphorylation of undecaprenyl diphosphate (UPP). Confers resistance to bacitracin. The chain is Undecaprenyl-diphosphatase from Trichodesmium erythraeum (strain IMS101).